Consider the following 215-residue polypeptide: Adenylate kinase (215 aa).

10-15 (GAGKGT) serves as a coordination point for ATP. The tract at residues 30–59 (STGDMLRAAVKAETELGLKAKSVMDSGGLV) is NMP. AMP is bound by residues Thr31, Arg36, 57-59 (GLV), 85-88 (GFPR), and Gln92. The LID stretch occupies residues 122-159 (GRRVHEGSGRIYHTIFNPPKVECIDDVTGEPLLQRKDD). ATP is bound by residues Arg123 and 132–133 (IY). Residues Arg156 and Arg167 each contribute to the AMP site. Residue Gly201 participates in ATP binding.

This sequence belongs to the adenylate kinase family. Monomer.

The protein resides in the cytoplasm. The enzyme catalyses AMP + ATP = 2 ADP. The protein operates within purine metabolism; AMP biosynthesis via salvage pathway; AMP from ADP: step 1/1. In terms of biological role, catalyzes the reversible transfer of the terminal phosphate group between ATP and AMP. Plays an important role in cellular energy homeostasis and in adenine nucleotide metabolism. The polypeptide is Adenylate kinase (Pseudomonas savastanoi pv. phaseolicola (strain 1448A / Race 6) (Pseudomonas syringae pv. phaseolicola (strain 1448A / Race 6))).